Reading from the N-terminus, the 95-residue chain is MASSHWNETTTSVYQYLGFQVQKIYPFHDNWNTACFVILLLFIFTVVSLVVLAFLYEVLDCCCCVKNKTVKDLKSEPNPLRSMMDNIRKRETEVV.

Residues cysteine 35–leucine 55 traverse the membrane as a helical segment.

The protein resides in the membrane. This is Small integral membrane protein 18 (SMIM18) from Homo sapiens (Human).